The sequence spans 64 residues: Large ribosomal subunit protein bL35 (64 aa).

Disordered stretches follow at residues 1 to 22 and 34 to 64; these read MPKA…TGKI and EHKP…LLNG. Over residues 34 to 48 the composition is skewed to basic and acidic residues; that stretch reads EHKPSTRTRRLDGHT. Residues 50–64 are compositionally biased toward polar residues; the sequence is VSANDTQRVNSLLNG.

This sequence belongs to the bacterial ribosomal protein bL35 family.

The protein is Large ribosomal subunit protein bL35 of Mycobacterium leprae (strain Br4923).